The following is a 217-amino-acid chain: MHFSSSARAADENFDYLFKIILIGDSNVGKTCVVQHFKSGVYTETQQNTIGVDFTVRSLDIDGKKVKMQVWDTAGQERFRTITQSYYRSAHAAIIAYDLTRRSTFESIPHWIHEIEKYGAANVVIMLIGNKCDLWEKRHVLFEDACTLAEKYGLLAVLETSAKESKNIEEVFVLMAKELIARNSLHLYGESALNGLPLDSSPVLMAQGPSEKTHCTC.

Positions 26, 28, 29, 30, 31, 32, 42, 43, 44, 45, and 49 each coordinate GTP. Threonine 31 serves as a coordination point for Mg(2+). A Switch 1 motif is present at residues 39-54; sequence SGVYTETQQNTIGVDF. Mg(2+) is bound by residues threonine 49 and aspartate 72. Positions 74 to 89 match the Switch 2 motif; the sequence is AGQERFRTITQSYYRS. 7 residues coordinate GTP: glycine 75, asparagine 130, lysine 131, aspartate 133, serine 161, alanine 162, and lysine 163. Residues cysteine 215 and cysteine 217 are each lipidated (S-geranylgeranyl cysteine). Cysteine 217 carries the post-translational modification Cysteine methyl ester.

This sequence belongs to the small GTPase superfamily. Rab family. Mg(2+) serves as cofactor.

It is found in the cell membrane. The catalysed reaction is GTP + H2O = GDP + phosphate + H(+). Its activity is regulated as follows. Regulated by guanine nucleotide exchange factors (GEFs) which promote the exchange of bound GDP for free GTP. Regulated by GTPase activating proteins (GAPs) which increase the GTP hydrolysis activity. Inhibited by GDP dissociation inhibitors (GDIs). Functionally, the small GTPases Rab are key regulators of intracellular membrane trafficking, from the formation of transport vesicles to their fusion with membranes. Rabs cycle between an inactive GDP-bound form and an active GTP-bound form that is able to recruit to membranes different set of downstream effectors directly responsible for vesicle formation, movement, tethering and fusion. The chain is Ras-related protein Rab-19 from Homo sapiens (Human).